Consider the following 562-residue polypeptide: Protein wntless (562 aa).

Topologically, residues 1-13 (MSGTILENLSGRK) are cytoplasmic. A helical membrane pass occupies residues 14–34 (LSILVSSLLLCQVACFLIGGL). At 35 to 239 (YAPVPAGHQI…AIHQNGGFTQ (205 aa)) the chain is on the lumenal side. N-linked (GlcNAc...) asparagine glycans are attached at residues Asn58 and Asn103. The helical transmembrane segment at 240-260 (VWLLLKSVLFPFIIGIMVWFW) threads the bilayer. Residues 261-270 (RRVHILQRSP) are Cytoplasmic-facing. Residues 271-291 (ALLEYMLLYLGGALSFLNLPL) traverse the membrane as a helical segment. Topologically, residues 292 to 311 (EYLTLSFEMPYMLLLSDVRQ) are lumenal. The helical transmembrane segment at 312-332 (GIFYAMLLSFWLVFAGEHMLI) threads the bilayer. Residues 333–344 (QDSPNKSTIRSR) lie on the Cytoplasmic side of the membrane. Residues 345–365 (YWKHLSAVVVGCISLFVFDIC) traverse the membrane as a helical segment. Residues 366 to 390 (ERGMQLRNPFYSIWTTPLGAKVAMS) lie on the Lumenal side of the membrane. A helical transmembrane segment spans residues 391–411 (FIVLAGVSAGIYFLFLCYMVW). At 412-441 (KVFKDIGDKRTSLPSMSQARRLHYEGLIYR) the chain is on the cytoplasmic side. The chain crosses the membrane as a helical span at residues 442–462 (FKFLMLATLLCAGLTVAGFIM). Residues 463–482 (GQMAEGHWKWNEDIEIQLTS) lie on the Lumenal side of the membrane. The chain crosses the membrane as a helical span at residues 483-503 (AFLTGVYGMWNIYIFALLILY). Over 504–562 (APSHKQWPTMRHSDETTQSNENIVASAASEEIEFSNLPSDSNPSEISSLTSFTRKVAFD) the chain is Cytoplasmic. The segment at 538–562 (SNLPSDSNPSEISSLTSFTRKVAFD) is disordered. A compositionally biased stretch (polar residues) spans 539–556 (NLPSDSNPSEISSLTSFT).

It belongs to the wntless family. Interacts with wg; in the Golgi. Interacts with Vps35, a component of the retromer complex; wls stability is regulated by Vps35.

It is found in the presynaptic cell membrane. Its subcellular location is the postsynaptic cell membrane. The protein resides in the cell membrane. It localises to the endoplasmic reticulum membrane. The protein localises to the endosome membrane. It is found in the golgi apparatus membrane. A segment polarity gene required for wingless (wg)-dependent patterning processes, acting in both wg-sending cells and wg-target cells. In non-neuronal cells wls directs wg secretion. The wls traffic loop encompasses the Golgi, the cell surface, an endocytic compartment and a retrograde route leading back to the Golgi, and involves clathrin-mediated endocytosis and the retromer complex (a conserved protein complex consisting of Vps35 and Vps26). In neuronal cells (the larval motorneuron NMJ), the wg signal moves across the synapse via the release of wls-containing exosome-like vesicles. Postsynaptic wls is required for the trafficking of fz2 through the fz2-interacting protein Grip. In Drosophila mojavensis (Fruit fly), this protein is Protein wntless.